A 279-amino-acid polypeptide reads, in one-letter code: 3-methyl-2-oxobutanoate hydroxymethyltransferase (279 aa).

Residues D43 and D82 each coordinate Mg(2+). 3-methyl-2-oxobutanoate-binding positions include 43–44 (DS), D82, and K112. A Mg(2+)-binding site is contributed by E114. The active-site Proton acceptor is E181.

This sequence belongs to the PanB family. In terms of assembly, homodecamer; pentamer of dimers. Mg(2+) serves as cofactor.

It localises to the cytoplasm. It carries out the reaction 3-methyl-2-oxobutanoate + (6R)-5,10-methylene-5,6,7,8-tetrahydrofolate + H2O = 2-dehydropantoate + (6S)-5,6,7,8-tetrahydrofolate. It participates in cofactor biosynthesis; (R)-pantothenate biosynthesis; (R)-pantoate from 3-methyl-2-oxobutanoate: step 1/2. Functionally, catalyzes the reversible reaction in which hydroxymethyl group from 5,10-methylenetetrahydrofolate is transferred onto alpha-ketoisovalerate to form ketopantoate. This Geobacillus kaustophilus (strain HTA426) protein is 3-methyl-2-oxobutanoate hydroxymethyltransferase.